The following is a 604-amino-acid chain: Dopamine receptor 3 (604 aa).

Residues 1–23 are Extracellular-facing; it reads MLTGQHHIPGIESPLMVVLWRVA. A helical transmembrane segment spans residues 24-44; that stretch reads AGVFLPLVPTMAVFGNVLVIL. At 45–58 the chain is on the cytoplasmic side; it reads SVYRERNLQTVTNM. Residues 59 to 79 traverse the membrane as a helical segment; that stretch reads LIVSLAVSDLFVAIGVMSFGV. Topologically, residues 80-96 are extracellular; the sequence is YYEWNGFKWGLGSFFCH. A disulfide bridge links Cys-95 with Cys-170. Residues 97–117 form a helical membrane-spanning segment; that stretch reads VYQALDVACSTASILNLLAIS. The Cytoplasmic portion of the chain corresponds to 118 to 141; it reads LDRYIAIGHPISYAQYGARGGRAM. A helical membrane pass occupies residues 142-162; the sequence is ISITIVWGVSCAVALPLLLGV. The Extracellular segment spans residues 163–179; sequence NPMENDQCELANPWFNM. The helical transmembrane segment at 180-200 threads the bilayer; that stretch reads ISSIFSFFIPCIAMIILYTII. Topologically, residues 201 to 520 are cytoplasmic; it reads FRRLRQRERA…TKQMRREHKA (320 aa). A disordered region spans residues 399–430; the sequence is SIQDEKKMNSRPPENPFAHQNGTNKQRLLPNP. The chain crosses the membrane as a helical span at residues 521 to 541; it reads TVTLAVVLAVFLFCWLPFFIL. At 542 to 559 the chain is on the extracellular side; it reads HLSNSICLVIDSNSDCIG. A helical transmembrane segment spans residues 560–580; that stretch reads FLPLYLATWLGYLNSSLNPLI. At 581–604 the chain is on the cytoplasmic side; the sequence is YTVFDQRFRNAFRNILSCGFFKKR.

It belongs to the G-protein coupled receptor 1 family.

Its subcellular location is the cell membrane. Functionally, receptor for dopamine. The activity of this receptor is mediated by G proteins which activate adenylyl cyclase. In terms of antagonist responses, would be classed with the D2-like dopamine receptor group. Mediates the effect of dopamine on the inhibition of locomotion. Acts as an antagonist of dop-1. The polypeptide is Dopamine receptor 3 (Caenorhabditis briggsae).